A 314-amino-acid chain; its full sequence is Probable cell division protein WhiA (314 aa).

A DNA-binding region (H-T-H motif) is located at residues 274 to 308; sequence SLKELGEMVSTGPISKSGVNHRLRKLNDLADKIRN.

The protein belongs to the WhiA family.

Its function is as follows. Involved in cell division and chromosome segregation. In Staphylococcus aureus (strain USA300), this protein is Probable cell division protein WhiA.